A 128-amino-acid chain; its full sequence is Small ribosomal subunit protein eS6 (128 aa).

The protein belongs to the eukaryotic ribosomal protein eS6 family.

In Thermoplasma volcanium (strain ATCC 51530 / DSM 4299 / JCM 9571 / NBRC 15438 / GSS1), this protein is Small ribosomal subunit protein eS6.